The primary structure comprises 269 residues: Putative pyruvate, phosphate dikinase regulatory protein (269 aa).

An ADP-binding site is contributed by glycine 147 to threonine 154.

It belongs to the pyruvate, phosphate/water dikinase regulatory protein family. PDRP subfamily.

The catalysed reaction is N(tele)-phospho-L-histidyl/L-threonyl-[pyruvate, phosphate dikinase] + ADP = N(tele)-phospho-L-histidyl/O-phospho-L-threonyl-[pyruvate, phosphate dikinase] + AMP + H(+). It carries out the reaction N(tele)-phospho-L-histidyl/O-phospho-L-threonyl-[pyruvate, phosphate dikinase] + phosphate + H(+) = N(tele)-phospho-L-histidyl/L-threonyl-[pyruvate, phosphate dikinase] + diphosphate. In terms of biological role, bifunctional serine/threonine kinase and phosphorylase involved in the regulation of the pyruvate, phosphate dikinase (PPDK) by catalyzing its phosphorylation/dephosphorylation. This chain is Putative pyruvate, phosphate dikinase regulatory protein, found in Geotalea uraniireducens (strain Rf4) (Geobacter uraniireducens).